Here is a 258-residue protein sequence, read N- to C-terminus: Granzyme M (258 aa).

Residues I21 to G250 enclose the Peptidase S1 domain. C46 and C62 form a disulfide bridge. Active-site charge relay system residues include H61 and D107. Positions N122–R141 are disordered. 3 cysteine pairs are disulfide-bonded: C142–C210, C173–C189, and C200–C226. N174 carries an N-linked (GlcNAc...) asparagine glycan. S204 functions as the Charge relay system in the catalytic mechanism. An N-linked (GlcNAc...) asparagine glycan is attached at N225.

It belongs to the peptidase S1 family. Granzyme subfamily.

It localises to the secreted. It is found in the cytoplasmic granule. Cleaves peptide substrates after methionine, leucine, and norleucine. Physiological substrates include EZR, alpha-tubulins and the apoptosis inhibitor BIRC5/Survivin. Promotes caspase activation and subsequent apoptosis of target cells. In Rattus norvegicus (Rat), this protein is Granzyme M (Gzmm).